We begin with the raw amino-acid sequence, 393 residues long: NAD(P)H-quinone oxidoreductase subunit H, chloroplastic (393 aa).

This sequence belongs to the complex I 49 kDa subunit family. NDH is composed of at least 16 different subunits, 5 of which are encoded in the nucleus.

The protein resides in the plastid. The protein localises to the chloroplast thylakoid membrane. The catalysed reaction is a plastoquinone + NADH + (n+1) H(+)(in) = a plastoquinol + NAD(+) + n H(+)(out). It catalyses the reaction a plastoquinone + NADPH + (n+1) H(+)(in) = a plastoquinol + NADP(+) + n H(+)(out). Its function is as follows. NDH shuttles electrons from NAD(P)H:plastoquinone, via FMN and iron-sulfur (Fe-S) centers, to quinones in the photosynthetic chain and possibly in a chloroplast respiratory chain. The immediate electron acceptor for the enzyme in this species is believed to be plastoquinone. Couples the redox reaction to proton translocation, and thus conserves the redox energy in a proton gradient. The sequence is that of NAD(P)H-quinone oxidoreductase subunit H, chloroplastic from Draba nemorosa (Woodland whitlowgrass).